The chain runs to 184 residues: NADH-quinone oxidoreductase subunit B (184 aa).

[4Fe-4S] cluster is bound by residues C37, C38, C103, and C132.

The protein belongs to the complex I 20 kDa subunit family. In terms of assembly, NDH-1 is composed of 14 different subunits. Subunits NuoB, C, D, E, F, and G constitute the peripheral sector of the complex. [4Fe-4S] cluster serves as cofactor.

The protein resides in the cell membrane. It catalyses the reaction a quinone + NADH + 5 H(+)(in) = a quinol + NAD(+) + 4 H(+)(out). Functionally, NDH-1 shuttles electrons from NADH, via FMN and iron-sulfur (Fe-S) centers, to quinones in the respiratory chain. The immediate electron acceptor for the enzyme in this species is believed to be a menaquinone. Couples the redox reaction to proton translocation (for every two electrons transferred, four hydrogen ions are translocated across the cytoplasmic membrane), and thus conserves the redox energy in a proton gradient. In Nocardioides sp. (strain ATCC BAA-499 / JS614), this protein is NADH-quinone oxidoreductase subunit B.